Here is a 384-residue protein sequence, read N- to C-terminus: S-adenosylmethionine synthase (384 aa).

Residue His15 coordinates ATP. A Mg(2+)-binding site is contributed by Asp17. Glu43 contacts K(+). Residues Glu56 and Gln99 each coordinate L-methionine. The interval 99–109 (QSPDINQGVDR) is flexible loop. Residues 164–166 (DAK), 230–231 (RF), Asp239, 245–246 (RK), Ala262, and Lys266 each bind ATP. Asp239 is an L-methionine binding site. Lys270 contributes to the L-methionine binding site.

Belongs to the AdoMet synthase family. Homotetramer; dimer of dimers. Requires Mg(2+) as cofactor. K(+) is required as a cofactor.

It localises to the cytoplasm. It carries out the reaction L-methionine + ATP + H2O = S-adenosyl-L-methionine + phosphate + diphosphate. Its pathway is amino-acid biosynthesis; S-adenosyl-L-methionine biosynthesis; S-adenosyl-L-methionine from L-methionine: step 1/1. Functionally, catalyzes the formation of S-adenosylmethionine (AdoMet) from methionine and ATP. The overall synthetic reaction is composed of two sequential steps, AdoMet formation and the subsequent tripolyphosphate hydrolysis which occurs prior to release of AdoMet from the enzyme. This Erwinia tasmaniensis (strain DSM 17950 / CFBP 7177 / CIP 109463 / NCPPB 4357 / Et1/99) protein is S-adenosylmethionine synthase.